Consider the following 374-residue polypeptide: Flagellar P-ring protein 1 (374 aa).

The signal sequence occupies residues 1–26 (MVPNLMVIKKHLIGLLLILCPLSLQA).

The protein belongs to the FlgI family. In terms of assembly, the basal body constitutes a major portion of the flagellar organelle and consists of four rings (L,P,S, and M) mounted on a central rod.

Its subcellular location is the periplasm. It is found in the bacterial flagellum basal body. Its function is as follows. Assembles around the rod to form the L-ring and probably protects the motor/basal body from shearing forces during rotation. This chain is Flagellar P-ring protein 1, found in Photobacterium profundum (strain SS9).